The sequence spans 210 residues: Uridine kinase (210 aa).

12–19 (GGSGGGKT) is an ATP binding site.

Belongs to the uridine kinase family.

The protein localises to the cytoplasm. The catalysed reaction is uridine + ATP = UMP + ADP + H(+). It catalyses the reaction cytidine + ATP = CMP + ADP + H(+). It functions in the pathway pyrimidine metabolism; CTP biosynthesis via salvage pathway; CTP from cytidine: step 1/3. The protein operates within pyrimidine metabolism; UMP biosynthesis via salvage pathway; UMP from uridine: step 1/1. The polypeptide is Uridine kinase (Streptococcus gordonii (strain Challis / ATCC 35105 / BCRC 15272 / CH1 / DL1 / V288)).